Here is a 181-residue protein sequence, read N- to C-terminus: Trafficking protein particle complex subunit 3 homolog (181 aa).

Cysteine 70 is lipidated: S-palmitoyl cysteine.

Belongs to the TRAPP small subunits family. BET3 subfamily. In terms of assembly, homodimer. Part of the multisubunit TRAPP (transport protein particle) complex.

The protein localises to the golgi apparatus. It localises to the cis-Golgi network. It is found in the endoplasmic reticulum. In terms of biological role, may play a role in vesicular transport from endoplasmic reticulum to Golgi. Required for the systemic spread of the RNAi response. The polypeptide is Trafficking protein particle complex subunit 3 homolog (Caenorhabditis briggsae).